The following is a 2211-amino-acid chain: Nonribosomal peptide synthetase 13 (2211 aa).

The adenylation 1 stretch occupies residues 76–475; it reads TYAELDSLSD…IEHHLQLTLP (400 aa). One can recognise a Carrier 1 domain in the interval 594–671; sequence PPSTPKEATI…EQSKRAGLIQ (78 aa). Serine 631 bears the O-(pantetheine 4'-phosphoryl)serine mark. The tract at residues 710 to 975 is condensation 1; it reads EDIYPCTALQ…IATVPTRIRV (266 aa). The tract at residues 1169 to 1563 is adenylation 2; that stretch reads TYRELWAHSS…LGAVEASVMR (395 aa). The Carrier 2 domain maps to 1677 to 1756; sequence PMSDDNERRL…RSRHLITEQA (80 aa). At serine 1714 the chain carries O-(pantetheine 4'-phosphoryl)serine. The tract at residues 1814 to 2069 is condensation 2; that stretch reads HFQFDLSGAV…CTNYIPYRLS (256 aa).

It belongs to the NRP synthetase family.

The catalysed reaction is L-proline + L-tryptophan + 2 ATP = brevianamide F + 2 AMP + 2 diphosphate + 2 H(+). Its pathway is mycotoxin biosynthesis. Nonribosomal peptide synthetase; part of the gene cluster that mediates the biosynthesis of fumitremorgins, indole alkaloids that carry not only intriguing chemical structures, but also interesting biological and pharmacological activities. The biosynthesis of fumitremorgin-type alkaloids begins by condensation of the two amino acids L-tryptophan and L-proline to brevianamide F, catalyzed by the non-ribosomal peptide synthetase ftmA. Brevianamide F is then prenylated by the prenyltransferase ftmPT1/ftmB in the presence of dimethylallyl diphosphate, resulting in the formation of tryprostatin B. The three cytochrome P450 monooxygenases, ftmP450-1/ftmC, ftmP450-2/ftmE and ftmP450-3/FtmG, are responsible for the conversion of tryprostatin B to 6-hydroxytryprostatin B, tryprostatin A to fumitremorgin C and fumitremorgin C to 12,13-dihydroxyfumitremorgin C, respectively. The putative methyltransferase ftmMT/ftmD is expected for the conversion of 6-hydroxytryprostatin B to tryprostatin A. FtmPT2/FtmH catalyzes the prenylation of 12,13-dihydroxyfumitre-morgin C in the presence of dimethylallyl diphosphate, resulting in the formation of fumitremorgin B. Fumitremorgin B is further converted to verruculogen by ftmOx1/ftmF via the insertion of an endoperoxide bond between the two prenyl moieties. In some fungal species, verruculogen is further converted to fumitremorgin A, but the enzymes involved in this step have not been identified yet. The protein is Nonribosomal peptide synthetase 13 of Aspergillus fumigatus (Neosartorya fumigata).